A 477-amino-acid chain; its full sequence is UDP-N-acetylmuramate--L-alanine ligase (477 aa).

Residue 122–128 (GTHGKTT) coordinates ATP.

It belongs to the MurCDEF family.

It localises to the cytoplasm. The catalysed reaction is UDP-N-acetyl-alpha-D-muramate + L-alanine + ATP = UDP-N-acetyl-alpha-D-muramoyl-L-alanine + ADP + phosphate + H(+). It participates in cell wall biogenesis; peptidoglycan biosynthesis. Functionally, cell wall formation. The protein is UDP-N-acetylmuramate--L-alanine ligase of Xanthomonas oryzae pv. oryzae (strain MAFF 311018).